We begin with the raw amino-acid sequence, 93 residues long: Alpha-elapitoxin-Oh3a (93 aa).

An N-terminal signal peptide occupies residues 1-21 (MKTLLLTLVVVTIVCLDLGYT). Intrachain disulfides connect C24/C42, C35/C63, C48/C52, C67/C78, and C79/C84.

This sequence belongs to the three-finger toxin family. Long-chain subfamily. Type II alpha-neurotoxin sub-subfamily. In terms of tissue distribution, expressed by the venom gland.

The protein localises to the secreted. In terms of biological role, binds to muscular and neuronal nicotinic acetylcholine receptor (nAChR) and inhibits acetylcholine from binding to the receptor, thereby impairing neuromuscular and neuronal transmission. Pseudo-irreversibly inhibits twitches in chick biventer cervicis nerve-muscle preparations in a concentration-dependent manner. The sequence is that of Alpha-elapitoxin-Oh3a from Ophiophagus hannah (King cobra).